A 508-amino-acid chain; its full sequence is Octopamine receptor beta-1R (508 aa).

The Extracellular portion of the chain corresponds to 1 to 111 (MTLLQRLQAM…SHLALVFVKC (111 aa)). Residues 112 to 132 (FIIGFIILAAILGNMLVIVSV) traverse the membrane as a helical segment. At 133 to 139 (MRHRKLR) the chain is on the cytoplasmic side. The chain crosses the membrane as a helical span at residues 140-160 (IITNYFVVSLAVADMLVALCA). At 161 to 186 (MTFNASVMISGKWMFGSVMCDMWNSF) the chain is on the extracellular side. A glycan (N-linked (GlcNAc...) asparagine) is linked at Asn-164. Residues 187–209 (DVYFSTASIMHLCCISVDRYYAI) traverse the membrane as a helical segment. Residues 210–223 (VQPLDYPLIMTQRR) are Cytoplasmic-facing. Residues 224–244 (VFIMLLMVWLSPALLSFLPIC) traverse the membrane as a helical segment. Residues 245 to 270 (SGWYTTTENYKYLKSNPHICEFKVNK) lie on the Extracellular side of the membrane. The helical transmembrane segment at 271 to 291 (AYAIVSSSMSFWIPGIVMLSM) threads the bilayer. Topologically, residues 292–351 (YYRIYQEADRQERLVYRSKVAALLLEKHLQISQIPKPRPSIQVEQSTISTMRRERKAART) are cytoplasmic. Residues 352 to 372 (LGIIMSAFLICWLPFFLWYIV) traverse the membrane as a helical segment. The Extracellular segment spans residues 373–383 (SSLCDSCITPR). The chain crosses the membrane as a helical span at residues 384 to 404 (LLVGILFWIGYFNSALNPIIY). Residues 405 to 508 (AYFNRDFRAA…MQQLHPLYTN (104 aa)) are Cytoplasmic-facing. Residues 440–464 (RDLEFGGPSRRGTNGAQRTGSGSAE) are disordered. Positions 450-461 (RGTNGAQRTGSG) are enriched in polar residues.

Belongs to the G-protein coupled receptor 1 family. In the adult, expressed in the superior protocerebrum and the optic lobe medulla of the central nervous system, nurse cells of egg chambers in the ovary at oogenic stages 1-10, and spermatogonia and spermatocytes in the testis. Expressed in embryonic and larval ventral nerve cord and brain lobe, and the larval imaginal disk and larval salivary gland. Also expressed in larval synaptic boutons and retinal cells in the optic disk.

Its subcellular location is the cell membrane. Functionally, autoreceptor for octopamine, which is a neurotransmitter, neurohormone, and neuromodulator in invertebrates. Negatively regulates synaptic growth by activating the inhibitory G protein Galphao and limiting cAMP production. Antagonizes the action of Octbeta2R which stimulates synaptic growth. The chain is Octopamine receptor beta-1R from Drosophila melanogaster (Fruit fly).